Here is a 222-residue protein sequence, read N- to C-terminus: Cytochrome b6 (222 aa).

The helical transmembrane segment at Ile-39–Phe-59 threads the bilayer. Cys-42 is a binding site for heme c. Positions 93 and 107 each coordinate heme b. 3 helical membrane passes run Ala-97–Phe-117, Leu-123–Tyr-143, and Leu-193–Ile-213. Positions 194 and 209 each coordinate heme b.

The protein belongs to the cytochrome b family. PetB subfamily. As to quaternary structure, the 4 large subunits of the cytochrome b6-f complex are cytochrome b6, subunit IV (17 kDa polypeptide, PetD), cytochrome f and the Rieske protein, while the 4 small subunits are PetG, PetL, PetM and PetN. The complex functions as a dimer. It depends on heme b as a cofactor. Requires heme c as cofactor.

It localises to the cellular thylakoid membrane. In terms of biological role, component of the cytochrome b6-f complex, which mediates electron transfer between photosystem II (PSII) and photosystem I (PSI), cyclic electron flow around PSI, and state transitions. The protein is Cytochrome b6 of Prochlorothrix hollandica.